The primary structure comprises 351 residues: Protein FAM118B (351 aa).

N-acetylalanine is present on Ala2. Ser9 carries the post-translational modification Phosphoserine.

It belongs to the FAM118 family.

Its subcellular location is the nucleus. The protein localises to the cajal body. Functionally, may play a role in Cajal bodies formation. The chain is Protein FAM118B (FAM118B) from Homo sapiens (Human).